The primary structure comprises 187 residues: Large ribosomal subunit protein eL18x (187 aa).

The disordered stretch occupies residues His-150–Val-187. Residues Tyr-165–Val-187 are compositionally biased toward basic residues.

Belongs to the eukaryotic ribosomal protein eL18 family.

The protein is Large ribosomal subunit protein eL18x (RPL18C) of Arabidopsis thaliana (Mouse-ear cress).